The following is a 155-amino-acid chain: Ribosomal RNA large subunit methyltransferase H (155 aa).

S-adenosyl-L-methionine contacts are provided by residues leucine 72, glycine 103, and 122-127 (LSDLTL).

Belongs to the RNA methyltransferase RlmH family. As to quaternary structure, homodimer.

Its subcellular location is the cytoplasm. The catalysed reaction is pseudouridine(1915) in 23S rRNA + S-adenosyl-L-methionine = N(3)-methylpseudouridine(1915) in 23S rRNA + S-adenosyl-L-homocysteine + H(+). Specifically methylates the pseudouridine at position 1915 (m3Psi1915) in 23S rRNA. The chain is Ribosomal RNA large subunit methyltransferase H from Delftia acidovorans (strain DSM 14801 / SPH-1).